Consider the following 339-residue polypeptide: DNA-directed RNA polymerase subunit alpha (339 aa).

The alpha N-terminal domain (alpha-NTD) stretch occupies residues 1-235; the sequence is MVLQKNWQSL…DQLQLFINFD (235 aa). An alpha C-terminal domain (alpha-CTD) region spans residues 251-339; it reads FNRNLLRKVD…DLAKRLDETF (89 aa).

It belongs to the RNA polymerase alpha chain family. As to quaternary structure, homodimer. The RNAP catalytic core consists of 2 alpha, 1 beta, 1 beta' and 1 omega subunit. When a sigma factor is associated with the core the holoenzyme is formed, which can initiate transcription.

The catalysed reaction is RNA(n) + a ribonucleoside 5'-triphosphate = RNA(n+1) + diphosphate. Its function is as follows. DNA-dependent RNA polymerase catalyzes the transcription of DNA into RNA using the four ribonucleoside triphosphates as substrates. This Gluconobacter oxydans (strain 621H) (Gluconobacter suboxydans) protein is DNA-directed RNA polymerase subunit alpha.